Consider the following 646-residue polypeptide: Serine/threonine-protein kinase sck2 (646 aa).

2 disordered regions span residues 17-85 and 143-176; these read VSTN…LPEV and GRDIGTSSRDSANVSRSSSMMSSHPIPTPAIQRT. Residues 68–80 are compositionally biased toward polar residues; it reads SDQSTVGNRNSND. The segment covering 149–165 has biased composition (low complexity); the sequence is SSRDSANVSRSSSMMSS. A Protein kinase domain is found at 266–527; that stretch reads FVPLKLIGKG…VEEVMKHPFF (262 aa). ATP is bound by residues 272–280 and Lys295; that span reads IGKGTFGQV. Asp392 (proton acceptor) is an active-site residue. Residues 528–605 enclose the AGC-kinase C-terminal domain; it reads DGIDWKKLAA…IDASAMDEAF (78 aa). Residues 609 to 646 are disordered; it reads NSNDSASSISSQDDYSKDNSDMDLNRANDEVFMGQIDP. Residues 610 to 621 show a composition bias toward low complexity; the sequence is SNDSASSISSQD. Positions 622-637 are enriched in basic and acidic residues; the sequence is DYSKDNSDMDLNRAND.

This sequence belongs to the protein kinase superfamily. AGC Ser/Thr protein kinase family. PKC subfamily.

The enzyme catalyses L-seryl-[protein] + ATP = O-phospho-L-seryl-[protein] + ADP + H(+). It catalyses the reaction L-threonyl-[protein] + ATP = O-phospho-L-threonyl-[protein] + ADP + H(+). Protein kinase that is part of growth control pathway which is at least partially redundant with the cAMP pathway. This is Serine/threonine-protein kinase sck2 (sck2) from Schizosaccharomyces pombe (strain 972 / ATCC 24843) (Fission yeast).